Reading from the N-terminus, the 612-residue chain is Sulfite reductase [NADPH] hemoprotein beta-component (612 aa).

A disordered region spans residues 1 to 32; it reads MDDHKPIDTPDGPAVDTPGIGAHRYEAPPTDR. The [4Fe-4S] cluster site is built by Cys469, Cys475, Cys514, and Cys518. Cys518 provides a ligand contact to siroheme.

Belongs to the nitrite and sulfite reductase 4Fe-4S domain family. In terms of assembly, alpha(8)-beta(8). The alpha component is a flavoprotein, the beta component is a hemoprotein. Requires siroheme as cofactor. [4Fe-4S] cluster is required as a cofactor.

The catalysed reaction is hydrogen sulfide + 3 NADP(+) + 3 H2O = sulfite + 3 NADPH + 4 H(+). The protein operates within sulfur metabolism; hydrogen sulfide biosynthesis; hydrogen sulfide from sulfite (NADPH route): step 1/1. Component of the sulfite reductase complex that catalyzes the 6-electron reduction of sulfite to sulfide. This is one of several activities required for the biosynthesis of L-cysteine from sulfate. The sequence is that of Sulfite reductase [NADPH] hemoprotein beta-component from Methylorubrum populi (strain ATCC BAA-705 / NCIMB 13946 / BJ001) (Methylobacterium populi).